The primary structure comprises 426 residues: Histidine--tRNA ligase (426 aa).

The protein belongs to the class-II aminoacyl-tRNA synthetase family. In terms of assembly, homodimer.

The protein localises to the cytoplasm. The enzyme catalyses tRNA(His) + L-histidine + ATP = L-histidyl-tRNA(His) + AMP + diphosphate + H(+). This is Histidine--tRNA ligase from Streptococcus pyogenes serotype M1.